Here is a 479-residue protein sequence, read N- to C-terminus: Glycine betaine methyltransferase (479 aa).

Belongs to the trimethylamine methyltransferase family.

The enzyme catalyses Co(I)-[glycine betaine-specific corrinoid protein] + glycine betaine + H(+) = methyl-Co(III)-[glycine betaine-specific corrinoid protein] + N,N-dimethylglycine. Functionally, methyltransferase able to methylate free cob(I)alamin in vitro, using glycine betaine as the methyl donor, yealding methylcobalamin (methylCbl) and dimethylglycine. In vivo, probably carries out the methylation of a corrinoid protein, likely the adjacently encoded DSY3155, with glycine betaine, to then supply methyl groups to tetrahydrofolate (THF) for ultimate conversion to carbon dioxide; oxidation of the methyl group would also provide reducing equivalents for anaerobic respiration. Thus, may function in the pathway that allows anaerobic methylotrophic growth of D.hafniense using glycine betaine. Cannot use quaternary amines such as carnitine and choline as substrates, nor tertiary amines such as dimethylglycine or trimethylamine. This Desulfitobacterium hafniense (strain Y51) protein is Glycine betaine methyltransferase.